A 259-amino-acid polypeptide reads, in one-letter code: Protein LEAD-SENSITIVE 1 (259 aa).

The LRAT domain occupies 20 to 168 (YSWRTAYIYA…CKTALLVLEG (149 aa)). Catalysis depends on residues His30 and His42. Cys152 serves as the catalytic Acyl-thioester intermediate.

Highly expressed in inflorescences, siliques and stems, and, to a lower extent, in roots and leaves.

It localises to the cytoplasm. In terms of biological role, confers tolerance to lead ions (Pb) stress mediated by Pb(NO(3))(2) probably by promoting Pb accumulation leading to subsequent glutathione-dependent phytochelatin (PC) synthesis and related gene expression, including PDR12/ABCG40, GSH1, GSH2, GR1, GR2, PCS1 and PCS2. This Arabidopsis thaliana (Mouse-ear cress) protein is Protein LEAD-SENSITIVE 1.